Consider the following 310-residue polypeptide: Fatty acid elongase 1 (310 aa).

Residues 1-63 (MVSDWKNFCL…VGKQPLSEPR (63 aa)) lie on the Lumenal side of the membrane. The chain crosses the membrane as a helical span at residues 64 to 84 (PVLLFIAMYYVVIFGGRSLVK). Residues 85–100 (SCKPLKLRFISQVHNL) are Cytoplasmic-facing. A helical transmembrane segment spans residues 101–121 (MLTSVSFLWLILMVEQMLPIV). Residues 122–141 (YRHGLYFAVCNVESWTQPME) lie on the Lumenal side of the membrane. The chain crosses the membrane as a helical span at residues 142 to 163 (TLYYLNYMTKFVEFADTVLMVL). The Cytoplasmic portion of the chain corresponds to 164–174 (KHRKLTFLHTY). Positions 172–176 (HTYHH) match the HxxHH motif motif. The chain crosses the membrane as a helical span at residues 175 to 196 (HHGATALLCYNQLVGYTAVTWV). At 197–201 (PVTLN) the chain is on the lumenal side. Residues 202–223 (LAVHVLMYWYYFLSASGIRVWW) form a helical membrane-spanning segment. The Cytoplasmic portion of the chain corresponds to 224-234 (KAWVTRLQIVQ). A helical membrane pass occupies residues 235–255 (FMLDLIVVYYVLYQKIVAAYF). The Lumenal segment spans residues 256-271 (KNACTPQCEDCLGSMT). A helical membrane pass occupies residues 272–292 (AIAAGAAILTSYLFLFISFYI). At 293–310 (EVYKRGSASGKKKINKNN) the chain is on the cytoplasmic side. The Di-lysine motif motif lies at 304–307 (KKIN).

The protein belongs to the ELO family.

Its subcellular location is the endoplasmic reticulum membrane. It carries out the reaction a very-long-chain acyl-CoA + malonyl-CoA + H(+) = a very-long-chain 3-oxoacyl-CoA + CO2 + CoA. The enzyme catalyses tetradecanoyl-CoA + malonyl-CoA + H(+) = 3-oxohexadecanoyl-CoA + CO2 + CoA. The catalysed reaction is (9Z)-tetradecenoyl-CoA + malonyl-CoA + H(+) = 3-oxo-(11Z)-hexadecenoyl-CoA + CO2 + CoA. In terms of biological role, component of a microsomal membrane bound medium-chain fatty acid elongation system, which extends medium-chain-length fatty acids to long-chain fatty acids. Component of elongase I, which extends 12-16-carbon fatty acyl-CoAs such as lauroyl-CoA to 14-18-carbon fatty acids by incorporation of malonyl-CoA. This chain is Fatty acid elongase 1, found in Saccharomyces cerevisiae (strain ATCC 204508 / S288c) (Baker's yeast).